Here is a 227-residue protein sequence, read N- to C-terminus: 7-cyano-7-deazaguanine synthase (227 aa).

ATP is bound at residue 8 to 18; the sequence is FSGGQDSTTCL. Zn(2+)-binding residues include Cys-187, Cys-196, Cys-199, and Cys-202.

The protein belongs to the QueC family. The cofactor is Zn(2+).

It carries out the reaction 7-carboxy-7-deazaguanine + NH4(+) + ATP = 7-cyano-7-deazaguanine + ADP + phosphate + H2O + H(+). Its pathway is purine metabolism; 7-cyano-7-deazaguanine biosynthesis. In terms of biological role, catalyzes the ATP-dependent conversion of 7-carboxy-7-deazaguanine (CDG) to 7-cyano-7-deazaguanine (preQ(0)). In Aliivibrio fischeri (strain ATCC 700601 / ES114) (Vibrio fischeri), this protein is 7-cyano-7-deazaguanine synthase.